An 849-amino-acid polypeptide reads, in one-letter code: Protein translocase subunit SecA (849 aa).

ATP is bound by residues Gln85, 103–107 (GEGKT), and Asp493. 4 residues coordinate Zn(2+): Cys832, Cys834, Cys843, and His844.

Belongs to the SecA family. In terms of assembly, monomer and homodimer. Part of the essential Sec protein translocation apparatus which comprises SecA, SecYEG and auxiliary proteins SecDF. Other proteins may also be involved. It depends on Zn(2+) as a cofactor.

The protein resides in the cell membrane. It localises to the cytoplasm. The enzyme catalyses ATP + H2O + cellular proteinSide 1 = ADP + phosphate + cellular proteinSide 2.. Part of the Sec protein translocase complex. Interacts with the SecYEG preprotein conducting channel. Has a central role in coupling the hydrolysis of ATP to the transfer of proteins into and across the cell membrane, serving as an ATP-driven molecular motor driving the stepwise translocation of polypeptide chains across the membrane. The sequence is that of Protein translocase subunit SecA from Streptococcus thermophilus (strain ATCC BAA-491 / LMD-9).